The following is a 158-amino-acid chain: Phosphopantetheine adenylyltransferase (158 aa).

Ser9 is a binding site for substrate. Residues 9-10 (SF) and His17 each bind ATP. Substrate contacts are provided by Lys41, Val73, and Lys87. Residues 88 to 90 (GLR), Glu98, and 122 to 128 (YSFVSSS) each bind ATP.

The protein belongs to the bacterial CoaD family. As to quaternary structure, homohexamer. Mg(2+) is required as a cofactor.

The protein resides in the cytoplasm. The catalysed reaction is (R)-4'-phosphopantetheine + ATP + H(+) = 3'-dephospho-CoA + diphosphate. It functions in the pathway cofactor biosynthesis; coenzyme A biosynthesis; CoA from (R)-pantothenate: step 4/5. In terms of biological role, reversibly transfers an adenylyl group from ATP to 4'-phosphopantetheine, yielding dephospho-CoA (dPCoA) and pyrophosphate. The polypeptide is Phosphopantetheine adenylyltransferase (Mycolicibacterium smegmatis (strain ATCC 700084 / mc(2)155) (Mycobacterium smegmatis)).